A 408-amino-acid chain; its full sequence is S-adenosylmethionine synthase (408 aa).

His-16 contributes to the ATP binding site. Asp-18 serves as a coordination point for Mg(2+). Glu-44 provides a ligand contact to K(+). L-methionine contacts are provided by Glu-57 and Gln-100. Residues Gln-100 to Arg-110 form a flexible loop region. ATP-binding positions include Asp-177–Lys-179, Asp-257, Arg-263–Lys-264, Ala-280, and Lys-284. An L-methionine-binding site is contributed by Asp-257. Lys-288 provides a ligand contact to L-methionine.

It belongs to the AdoMet synthase family. In terms of assembly, homotetramer; dimer of dimers. Requires Mg(2+) as cofactor. The cofactor is K(+).

It localises to the cytoplasm. It catalyses the reaction L-methionine + ATP + H2O = S-adenosyl-L-methionine + phosphate + diphosphate. It participates in amino-acid biosynthesis; S-adenosyl-L-methionine biosynthesis; S-adenosyl-L-methionine from L-methionine: step 1/1. In terms of biological role, catalyzes the formation of S-adenosylmethionine (AdoMet) from methionine and ATP. The overall synthetic reaction is composed of two sequential steps, AdoMet formation and the subsequent tripolyphosphate hydrolysis which occurs prior to release of AdoMet from the enzyme. The polypeptide is S-adenosylmethionine synthase (Bifidobacterium animalis subsp. lactis (strain AD011)).